The sequence spans 256 residues: Probable hydroxyacylglutathione hydrolase glo2 (256 aa).

Zn(2+) contacts are provided by His63, His65, Asp67, His68, His118, and Asp139. Residues Arg148, 178–180 (HEY), and 250–253 (RDMK) each bind substrate. His178 contacts Zn(2+).

It belongs to the metallo-beta-lactamase superfamily. Glyoxalase II family. The cofactor is Zn(2+).

The protein localises to the cytoplasm. Its subcellular location is the nucleus. It carries out the reaction an S-(2-hydroxyacyl)glutathione + H2O = a 2-hydroxy carboxylate + glutathione + H(+). It catalyses the reaction (R)-S-lactoylglutathione + H2O = (R)-lactate + glutathione + H(+). It participates in secondary metabolite metabolism; methylglyoxal degradation; (R)-lactate from methylglyoxal: step 2/2. Thiolesterase that catalyzes the hydrolysis of S-D-lactoylglutathione to form glutathione and D-lactic acid. Involved in the metabolism of methylglyoxal, a toxic compound for yeast proliferation, by converting methylglyoxal to lactate via S-D-lactoylglutathione by sequential enzyme reactions catalyzed by glyoxalase I and glyoxalase II. The polypeptide is Probable hydroxyacylglutathione hydrolase glo2 (glo2) (Schizosaccharomyces pombe (strain 972 / ATCC 24843) (Fission yeast)).